The following is a 270-amino-acid chain: Tryptophan synthase alpha chain (270 aa).

Catalysis depends on proton acceptor residues Glu-49 and Asp-60.

This sequence belongs to the TrpA family. In terms of assembly, tetramer of two alpha and two beta chains.

It carries out the reaction (1S,2R)-1-C-(indol-3-yl)glycerol 3-phosphate + L-serine = D-glyceraldehyde 3-phosphate + L-tryptophan + H2O. It participates in amino-acid biosynthesis; L-tryptophan biosynthesis; L-tryptophan from chorismate: step 5/5. Its function is as follows. The alpha subunit is responsible for the aldol cleavage of indoleglycerol phosphate to indole and glyceraldehyde 3-phosphate. The polypeptide is Tryptophan synthase alpha chain (Marinobacter nauticus (strain ATCC 700491 / DSM 11845 / VT8) (Marinobacter aquaeolei)).